The primary structure comprises 609 residues: Threonine--tRNA ligase (609 aa).

Positions 1 to 145 (MRLLLIHSDY…TIVPGAGAAV (145 aa)) are editing domain. Residues 194–485 (IHVDLMRSKE…TANQSVPQLP (292 aa)) form a catalytic region. 3 residues coordinate Zn(2+): Cys286, His338, and His458.

This sequence belongs to the class-II aminoacyl-tRNA synthetase family. In terms of assembly, homodimer. Requires Zn(2+) as cofactor.

The protein localises to the cytoplasm. It carries out the reaction tRNA(Thr) + L-threonine + ATP = L-threonyl-tRNA(Thr) + AMP + diphosphate + H(+). Functionally, catalyzes the attachment of threonine to tRNA(Thr) in a two-step reaction: L-threonine is first activated by ATP to form Thr-AMP and then transferred to the acceptor end of tRNA(Thr). Also edits incorrectly charged L-seryl-tRNA(Thr). The polypeptide is Threonine--tRNA ligase (Methanosphaerula palustris (strain ATCC BAA-1556 / DSM 19958 / E1-9c)).